The following is a 440-amino-acid chain: tRNA(Ile)-lysidine synthase (440 aa).

31–36 (SGGADS) provides a ligand contact to ATP.

This sequence belongs to the tRNA(Ile)-lysidine synthase family.

It localises to the cytoplasm. It catalyses the reaction cytidine(34) in tRNA(Ile2) + L-lysine + ATP = lysidine(34) in tRNA(Ile2) + AMP + diphosphate + H(+). In terms of biological role, ligates lysine onto the cytidine present at position 34 of the AUA codon-specific tRNA(Ile) that contains the anticodon CAU, in an ATP-dependent manner. Cytidine is converted to lysidine, thus changing the amino acid specificity of the tRNA from methionine to isoleucine. This chain is tRNA(Ile)-lysidine synthase, found in Borreliella burgdorferi (strain ATCC 35210 / DSM 4680 / CIP 102532 / B31) (Borrelia burgdorferi).